The sequence spans 228 residues: Adapter protein MecA (228 aa).

This sequence belongs to the MecA family. In terms of assembly, homodimer.

Its function is as follows. Enables the recognition and targeting of unfolded and aggregated proteins to the ClpC protease or to other proteins involved in proteolysis. This Lacticaseibacillus paracasei (strain ATCC 334 / BCRC 17002 / CCUG 31169 / CIP 107868 / KCTC 3260 / NRRL B-441) (Lactobacillus paracasei) protein is Adapter protein MecA.